A 177-amino-acid polypeptide reads, in one-letter code: MTDSCTLNKKSSYTYEDLLASSRGELFGPKGPQLPAPTMLMMDRVIEMNETGGNYGKGYVEAELDIKPDLFFFGCHFIGDPVMPGCLGLDAMWQLVGFYLGWIGGEGKGRALGVGEVKFTGQILPTAKKVIYRIHLKRVINRKLVMGLADGEVEVDGRVIYTATDLKVGLFQDMSTF.

Histidine 76 is a catalytic residue.

The protein belongs to the thioester dehydratase family. FabA subfamily. In terms of assembly, homodimer.

Its subcellular location is the cytoplasm. The enzyme catalyses a (3R)-hydroxyacyl-[ACP] = a (2E)-enoyl-[ACP] + H2O. It catalyses the reaction (3R)-hydroxydecanoyl-[ACP] = (2E)-decenoyl-[ACP] + H2O. The catalysed reaction is (2E)-decenoyl-[ACP] = (3Z)-decenoyl-[ACP]. The protein operates within lipid metabolism; fatty acid biosynthesis. Its function is as follows. Necessary for the introduction of cis unsaturation into fatty acids. Catalyzes the dehydration of (3R)-3-hydroxydecanoyl-ACP to E-(2)-decenoyl-ACP and then its isomerization to Z-(3)-decenoyl-ACP. Can catalyze the dehydratase reaction for beta-hydroxyacyl-ACPs with saturated chain lengths up to 16:0, being most active on intermediate chain length. The polypeptide is 3-hydroxydecanoyl-[acyl-carrier-protein] dehydratase (Mannheimia succiniciproducens (strain KCTC 0769BP / MBEL55E)).